We begin with the raw amino-acid sequence, 85 residues long: Large ribosomal subunit protein bL31B (85 aa).

Belongs to the bacterial ribosomal protein bL31 family. Type B subfamily. As to quaternary structure, part of the 50S ribosomal subunit.

The sequence is that of Large ribosomal subunit protein bL31B from Stutzerimonas stutzeri (strain A1501) (Pseudomonas stutzeri).